The chain runs to 600 residues: 1,8-cineole synthase 1, chloroplastic (600 aa).

The transit peptide at 1–31 (MATLRISSALIYQNTLTHHFRLRRPHRFVCK) directs the protein to the chloroplast. Asp342 contributes to the dimethylallyl diphosphate binding site. The Mg(2+) site is built by Asp342 and Asp346. The DDXXD motif signature appears at 342–346 (DDIYD). Dimethylallyl diphosphate is bound by residues Glu420, Arg484, and Asn487. 3 residues coordinate Mg(2+): Asn487, Thr491, and Glu495.

Belongs to the terpene synthase family. Tpsb subfamily. The cofactor is Mg(2+). Mn(2+) serves as cofactor. In terms of tissue distribution, predominantly expressed in roots and at much lower levels in siliques. Not found in leaves, flowers or stems. Also detected in flowers in cv. Landsberg erecta. Not expressed in root apical meristem and elongation zone. Found in the vascular system of young roots and additionally in the cortex and epidermal cell layer of older roots.

It localises to the plastid. The protein resides in the chloroplast. The catalysed reaction is (2E)-geranyl diphosphate + H2O = 1,8-cineole + diphosphate. It functions in the pathway secondary metabolite biosynthesis; terpenoid biosynthesis. Functionally, involved in monoterpene (C10) biosynthesis. The major product is 1,8-cineole (52%) followed by minor amounts of sabinene (14.5%), myrcene (13.3%), (-)-(1S)-beta-pinene (7.8%), (-)-(4S)-limonene (4.0%), (E)-beta-ocimene (2.7%), alpha-terpineol (2.4%), (-)-(1S)-alpha-pinene (1.9%), terpinolene (0.8%), and (+)-alpha-thujene (0.6%). The polypeptide is 1,8-cineole synthase 1, chloroplastic (TPS27) (Arabidopsis thaliana (Mouse-ear cress)).